Reading from the N-terminus, the 299-residue chain is GDNF family receptor alpha-4 (299 aa).

The signal sequence occupies residues 1–20; it reads MVRCLGPALLLLLLLGSASS. A disordered region spans residues 145-198; sequence RGLSPAHRPPAAQASPPGLSGLVHPSAQRPRRLPAGPGRPLPARLRGPRGVPAG. The span at 177–198 shows a compositional bias: low complexity; that stretch reads LPAGPGRPLPARLRGPRGVPAG. The N-linked (GlcNAc...) asparagine glycan is linked to asparagine 208. Glycine 278 is lipidated: GPI-anchor amidated glycine. The propeptide at 279-299 is removed in mature form; that stretch reads RALERRSLLSILPVLALPALL.

Belongs to the GDNFR family. As to quaternary structure, interacts with ARTN ligand and RET: forms a 2:2:2 ternary complex composed of ARTN ligand, GFRA3 and RET receptor. Interacts with SORL1. In terms of tissue distribution, predominantly expressed in the adult thyroid gland. Low levels also found in fetal adrenal and thyroid glands.

Its subcellular location is the cell membrane. It localises to the secreted. Functionally, receptor for persephin (PSPN), a growth factor that exhibits neurotrophic activity on mesencephalic dopaminergic and motor neurons. Acts by binding to its coreceptor, GFRA4, leading to autophosphorylation and activation of the RET receptor. May be important in C-cell development and, in the postnatal development of the adrenal medulla. This is GDNF family receptor alpha-4 (GFRA4) from Homo sapiens (Human).